We begin with the raw amino-acid sequence, 177 residues long: Phosphatidylglycerol/phosphatidylinositol transfer protein (177 aa).

Residues 1 to 17 form the signal peptide; it reads MRLSAAVIALLSTSAAA. Positions 18–30 are excised as a propeptide; it reads FSVYRENSVSAND.

This sequence belongs to the NPC2 family. In terms of assembly, monomer.

Its function is as follows. Catalyzes the intermembrane transfer of phosphatidylglycerol and phosphatidylinositol. This chain is Phosphatidylglycerol/phosphatidylinositol transfer protein (npc-2), found in Neurospora crassa (strain ATCC 24698 / 74-OR23-1A / CBS 708.71 / DSM 1257 / FGSC 987).